The chain runs to 283 residues: Probable endonuclease 4 (283 aa).

Zn(2+) is bound by residues histidine 69, histidine 109, glutamate 145, aspartate 179, histidine 182, histidine 216, aspartate 229, histidine 231, and glutamate 261.

This sequence belongs to the AP endonuclease 2 family. Requires Zn(2+) as cofactor.

It catalyses the reaction Endonucleolytic cleavage to 5'-phosphooligonucleotide end-products.. Endonuclease IV plays a role in DNA repair. It cleaves phosphodiester bonds at apurinic or apyrimidinic (AP) sites, generating a 3'-hydroxyl group and a 5'-terminal sugar phosphate. This Campylobacter concisus (strain 13826) protein is Probable endonuclease 4.